A 269-amino-acid chain; its full sequence is Zinc finger protein SNAI2 (269 aa).

The segment at 1-20 (MPRSFLVKKHFNASKKPNYS) is SNAG domain. A disordered region spans residues 81 to 117 (SSSLGRVSPPPSSDTSSKDHSGSESPISDEEERLQPK). C2H2-type zinc fingers lie at residues 129-151 (FQCN…KQLH), 160-182 (FSCK…IRTH), 186-208 (CVCK…IRTH), and 214-236 (FSCP…LQTH). Residues 242 to 265 (YQCKNCSKTFSRMSLLHKHEESGC) form a C2H2-type 5; atypical zinc finger.

This sequence belongs to the snail C2H2-type zinc-finger protein family. In terms of assembly, interacts (via SNAG domain) with LIMD1 (via LIM domains), WTIP (via LIM domains) and AJUBA (via LIM domains). Interacts (via zinc fingers) with KPNA2, KPNB1, and TNPO1. May interact (via zinc fingers) with IPO7. In terms of processing, phosphorylated by GSK3B. Once phosphorylated, it becomes a target for ubiquitination. Post-translationally, ubiquitinated by the SCF(FBXO11) complex; ubiquitination requires previous GSK3B-mediated SNAI2 phosphorylation.

It localises to the nucleus. It is found in the cytoplasm. In terms of biological role, transcriptional repressor that modulates both activator-dependent and basal transcription. Involved in the generation and migration of neural crest cells. Plays a role in mediating RAF1-induced transcriptional repression of the TJ protein, occludin (OCLN) and subsequent oncogenic transformation of epithelial cells. Represses BRCA2 expression by binding to its E2-box-containing silencer and recruiting CTBP1 and HDAC1 in breast cells. In epidermal keratinocytes, binds to the E-box in ITGA3 promoter and represses its transcription. Involved in the regulation of ITGB1 and ITGB4 expression and cell adhesion and proliferation in epidermal keratinocytes. Binds to E-box2 domain of BSG and activates its expression during TGFB1-induced epithelial-mesenchymal transition (EMT) in hepatocytes. Represses E-Cadherin/CDH1 transcription via E-box elements. Involved in osteoblast maturation. Binds to RUNX2 and SOC9 promoters and may act as a positive and negative transcription regulator, respectively, in osteoblasts. Binds to CXCL12 promoter via E-box regions in mesenchymal stem cells and osteoblasts. Plays an essential role in TWIST1-induced EMT and its ability to promote invasion and metastasis. The protein is Zinc finger protein SNAI2 (Snai2) of Mus musculus (Mouse).